Here is a 451-residue protein sequence, read N- to C-terminus: REST corepressor 3 (451 aa).

The tract at residues 1–55 (MPGMMEKGPELLGKSRSANGGAKSPAGGGGSSANGGLHFSEPESGCSSDDEHGDV) is disordered. In terms of domain architecture, ELM2 spans 55 to 139 (VGMRVGAEYQ…KSLADLPNFT (85 aa)). Lys76 is covalently cross-linked (Glycyl lysine isopeptide (Lys-Gly) (interchain with G-Cter in SUMO2)). An SANT domain is found at 140-191 (PFPDEWTVEDKVLFEQAFSFHGKSFHRIQQMLPDKTIASLVKYYYSWKKTRS). Residues 204–275 (ANRHNQGDSD…SQRSKCRPPK (72 aa)) form a disordered region. Residues Ser212 and Ser227 each carry the phosphoserine modification. Residues 218 to 240 (EAHPMDGNDSDYDPKKEAKREGN) are compositionally biased toward basic and acidic residues. Lys249 participates in a covalent cross-link: Glycyl lysine isopeptide (Lys-Gly) (interchain with G-Cter in SUMO2). Over residues 261 to 273 (QHRHHSQRSKCRP) the composition is skewed to basic residues. The stretch at 293 to 329 (AANTILRQLDMELISLKRQVQNAKQVNSALKQKMEGG) forms a coiled coil. The tract at residues 333–451 (FKPPEAQTPQ…IQTDSQPSLH (119 aa)) is disordered. The span at 349–361 (PSPPAPSSTPTPT) shows a compositional bias: pro residues. Positions 375–384 (RPTLPAAPAL) are enriched in low complexity. Asymmetric dimethylarginine is present on residues Arg401 and Arg413. Residues 431–451 (VGGQQPPSLIGIQTDSQPSLH) show a composition bias toward polar residues.

The protein belongs to the CoREST family.

The protein localises to the nucleus. May act as a component of a corepressor complex that represses transcription. This chain is REST corepressor 3 (Rcor3), found in Mus musculus (Mouse).